We begin with the raw amino-acid sequence, 208 residues long: MAEEEEPKPPPLRRKSSANYRGYAVEPHAKRQSKISASRKLQLKTLLLQRAKRDLEREEQERAGEKQRHLGELCPPPELDGLGVAQLQELCRELHARIGRVDEERYDMGTRVSKNMAEMEELRLRVAGGRFVRPALRRVRLSADAMMAALLGSKHRVGTDLRAGLRQVRKDEAEKESREVGDWRKNVDALSGMEGRKKKFEAPGGGQS.

Disordered regions lie at residues 1–37, 54–74, and 168–208; these read MAEEEEPKPPPLRRKSSANYRGYAVEPHAKRQSKISA, DLEREEQERAGEKQRHLGELC, and VRKD…GGQS. Alanine 2 is modified (N-acetylalanine). An involved in binding TNC region spans residues 28-73; it reads HAKRQSKISASRKLQLKTLLLQRAKRDLEREEQERAGEKQRHLGEL. Basic and acidic residues-rich tracts occupy residues 54 to 71 and 168 to 187; these read DLEREEQERAGEKQRHLG and VRKDEAEKESREVGDWRKNV.

Belongs to the troponin I family. In terms of assembly, binds to actin and tropomyosin.

In terms of biological role, troponin I is the inhibitory subunit of troponin, the thin filament regulatory complex which confers calcium-sensitivity to striated muscle actomyosin ATPase activity. This Coturnix japonica (Japanese quail) protein is Troponin I, cardiac muscle (TNNI3).